We begin with the raw amino-acid sequence, 154 residues long: Low molecular weight protein-tyrosine-phosphatase PtpA (154 aa).

Cysteine 8 acts as the Nucleophile in catalysis. Arginine 14 is an active-site residue. The Proton donor role is filled by aspartate 120.

Belongs to the low molecular weight phosphotyrosine protein phosphatase family. As to quaternary structure, interacts with host CORO1A. Post-translationally, phosphorylations at Tyr-122 and Tyr-123 are essential for phosphatase activity.

It is found in the secreted. It catalyses the reaction O-phospho-L-tyrosyl-[protein] + H2O = L-tyrosyl-[protein] + phosphate. Secreted tyrosine phosphatase that plays a critical role during infection as a bacterial effector protein that counteracts host defenses. Required for intramacrophage survival. This is Low molecular weight protein-tyrosine-phosphatase PtpA (ptpA) from Staphylococcus aureus (strain MSSA476).